The chain runs to 365 residues: Coxsackievirus and adenovirus receptor homolog (365 aa).

Residues 1–19 (MELLLRFLLLCGVADFTRG) form the signal peptide. Ig-like C2-type domains lie at 20 to 136 (LSIT…IQLT) and 141 to 228 (PSGI…LRLD). Topologically, residues 20–238 (LSITTPEQMI…VVPPSNRAGT (219 aa)) are extracellular. Cystine bridges form between cysteine 41-cysteine 120, cysteine 146-cysteine 223, and cysteine 162-cysteine 212. Residue asparagine 106 is glycosylated (N-linked (GlcNAc...) asparagine). A helical transmembrane segment spans residues 239 to 259 (IAGAVIGTLLALVLIALIVFC). Residues cysteine 259 and cysteine 260 are each lipidated (S-palmitoyl cysteine). Residues 260–365 (CHKKRREEKY…PAQSKDGSIV (106 aa)) lie on the Cytoplasmic side of the membrane. Basic and acidic residues predominate over residues 269–282 (YEKEVHHDIREDVP). The interval 269-343 (YEKEVHHDIR…TLPPAKVAAP (75 aa)) is disordered. Residues 286–322 (SRTSTARSYIGSNHSSLGSMSPSNMEGYSKTQYNQVP) are compositionally biased toward polar residues. Phosphoserine is present on residues serine 297, serine 304, serine 306, serine 323, serine 332, and serine 363. The PDZ-binding signature appears at 360 to 365 (KDGSIV).

In terms of assembly, monomer. May form homodimers. Interacts with LNX, MAGI1, DLG4, PRKCABP, TJP1 and CTNNB1. Interacts with MPDZ; recruits MPDZ to intercellular contact sites. Interacts with JAML (homodimeric form). N-glycosylated. In terms of processing, palmitoylated on Cys-259 and/or Cys-260; required for proper localization to the plasma membrane.

The protein localises to the cell membrane. Its subcellular location is the basolateral cell membrane. It is found in the cell junction. It localises to the tight junction. The protein resides in the adherens junction. Component of the epithelial apical junction complex that may function as a homophilic cell adhesion molecule and is essential for tight junction integrity. Also involved in transepithelial migration of leukocytes through adhesive interactions with JAML a transmembrane protein of the plasma membrane of leukocytes. The interaction between both receptors also mediates the activation of gamma-delta T-cells, a subpopulation of T-cells residing in epithelia and involved in tissue homeostasis and repair. Upon epithelial CXADR-binding, JAML induces downstream cell signaling events in gamma-delta T-cells through PI3-kinase and MAP kinases. It results in proliferation and production of cytokines and growth factors by T-cells that in turn stimulate epithelial tissues repair. This is Coxsackievirus and adenovirus receptor homolog (CXADR) from Bos taurus (Bovine).